The primary structure comprises 386 residues: Putative prophage major tail sheath protein (386 aa).

Belongs to the myoviridae tail sheath protein family.

The protein resides in the secreted. The sequence is that of Putative prophage major tail sheath protein from Pseudomonas aeruginosa (strain UCBPP-PA14).